A 280-amino-acid chain; its full sequence is Energy-coupling factor transporter ATP-binding protein EcfA1 (280 aa).

Residues 6-241 (IELKNVTFRY…GDELLDLGLD (236 aa)) form the ABC transporter domain. 41 to 48 (GHNGSGKS) is a binding site for ATP.

It belongs to the ABC transporter superfamily. Energy-coupling factor EcfA family. As to quaternary structure, forms a stable energy-coupling factor (ECF) transporter complex composed of 2 membrane-embedded substrate-binding proteins (S component), 2 ATP-binding proteins (A component) and 2 transmembrane proteins (T component).

Its subcellular location is the cell membrane. ATP-binding (A) component of a common energy-coupling factor (ECF) ABC-transporter complex. Unlike classic ABC transporters this ECF transporter provides the energy necessary to transport a number of different substrates. This Streptococcus mutans serotype c (strain ATCC 700610 / UA159) protein is Energy-coupling factor transporter ATP-binding protein EcfA1.